Reading from the N-terminus, the 851-residue chain is MTDWKTTITPEERNGNSIKILDFLMQWYPNFNRAEALVRANTLEDRIFNTPGIISKNDYIERIAKKIYAIGESLEAKKAQAGMTNNPQTPNPMPTTPITPLIQQPITPVQQQVPPQKQPQPVYNQQQNQQQNQNQYTTTYPSPNTPQQSNTPPISNNNSNNNSNNNLNNNNNNNINNNNNNNNNNNNNNNNNNNNNNNNNNNNNNNNNNTVYAQPLTPQQQIQQQQHQQHQLYLQQQQQLQRLAQQNQQQQPTIMQQVQNQQPTQQQQQQQQQQQQQQQQQQLNQQQINQIKQQQQQQQQQQQQHQQPVQMPSGVTTNKQSPQPQNTPLTPQQQQQLLAAQQSHAQAQANQNQQLQNPKRISSTNNTHLMPCLPSTLYPTATQQDINNMYWERVSSIKKYIPEIEAIIPKIIENFSQSQNQQPQKVETYKKKFLDFVQMVKVTPETVVPPLNLDELTNAERYLMNMYLSSLSEEEQFKKILGTIDDRSNDNLIHFEKDLLNAFERTKRYFSDTFLNKTGGVTSKAPSILWFKNPALNNPFTSATKCQFSDPIVPKKKQHILLDSWTPEFKKIKKGNYEIFEKDQKIYNNLKKDLIDFTKNDNTLLPAKFIDKDTIIISETINGGDGGNNLYIHFNQCQFSTSWKGSKKNPAMFVCSSPNIQISSDGELFSIQPLCGLSWDRAEIIIKHYKQSLNRGDLISKELSQVISLNRYTIESHLDLENAKFFIQFSTKSTLLLKSKKQQQQQQDEKINNNNNNFYNLSILLEVPNNYPYSPISYSFPPEYQLTPYLKDLESKMNKEFENSNDLNQLNNNINNNNNNNNSFSDNTQLPTNQSIVESLKIFEKVLKDLV.

Disordered stretches follow at residues 79–212 (AQAG…NTVY) and 299–368 (QQQQ…NNTH). Residues 98–141 (ITPLIQQPITPVQQQVPPQKQPQPVYNQQQNQQQNQNQYTTTYP) show a composition bias toward low complexity. A compositionally biased stretch (polar residues) spans 145–154 (TPQQSNTPPI). Positions 155–212 (SNNNSNNNSNNNLNNNNNNNINNNNNNNNNNNNNNNNNNNNNNNNNNNNNNNNNNTVY) are enriched in low complexity. A coiled-coil region spans residues 231 to 307 (QLYLQQQQQL…QQQQQQQHQQ (77 aa)). Positions 308 to 319 (PVQMPSGVTTNK) are enriched in polar residues. Low complexity predominate over residues 320–358 (QSPQPQNTPLTPQQQQQLLAAQQSHAQAQANQNQQLQNP). Polar residues predominate over residues 359–368 (KRISSTNNTH). The stretch at 790 to 827 (LKDLESKMNKEFENSNDLNQLNNNINNNNNNNNSFSDN) forms a coiled coil.

This sequence belongs to the Mediator complex subunit 15 family. In terms of assembly, component of the Mediator complex.

It is found in the cytoplasm. It localises to the nucleus. Its function is as follows. Component of the Mediator complex, a coactivator involved in the regulated transcription of nearly all RNA polymerase II-dependent genes. Mediator functions as a bridge to convey information from gene-specific regulatory proteins to the basal RNA polymerase II transcription machinery. Mediator is recruited to promoters by direct interactions with regulatory proteins and serves as a scaffold for the assembly of a functional preinitiation complex with RNA polymerase II and the general transcription factors. The chain is Putative mediator of RNA polymerase II transcription subunit 15 (med15) from Dictyostelium discoideum (Social amoeba).